The primary structure comprises 2193 residues: Highly reducing polyketide synthase VdtX (2193 aa).

In terms of domain architecture, Ketosynthase family 3 (KS3) spans 1–417 (MAICGIAVRL…GVNAHVIIES (417 aa)). Residues cysteine 170, histidine 306, and histidine 340 each act as for beta-ketoacyl synthase activity in the active site. The interval 513 to 809 (VFAGQGAQWP…HPYVPCLIRF (297 aa)) is malonyl-CoA:ACP transacylase (MAT) domain. Residues 877-1001 (HELLGTRVVD…GEVAQENLSR (125 aa)) are N-terminal hotdog fold. The dehydratase (DH) domain stretch occupies residues 877 to 1128 (HELLGTRVVD…DIVLRPLGAN (252 aa)). The region spanning 877 to 1202 (HELLGTRVVD…LQRQPKPSSE (326 aa)) is the PKS/mFAS DH domain. Histidine 909 acts as the Proton acceptor; for dehydratase activity in catalysis. The tract at residues 1032–1202 (SVTSNTVSGR…LQRQPKPSSE (171 aa)) is C-terminal hotdog fold. The active-site Proton donor; for dehydratase activity is the aspartate 1093. The segment at 1256–1390 (NYLNEPQQRI…DRWDSILKAA (135 aa)) is methyltransferase (CMet) domain. The segment at 1575–1783 (GQQVQLLGDD…SGQHIGQLRL (209 aa)) is enoyl reductase (ER) domain. The segment at 1807–1981 (ASYLLVGGLG…ASVIDIGEVQ (175 aa)) is ketoreductase (KR) domain. The Carrier domain maps to 2102–2183 (PSATQFVSLE…AMGEHVIREL (82 aa)). O-(pantetheine 4'-phosphoryl)serine is present on serine 2143.

Functionally, highly reducing polyketide synthase; part of the gene cluster that mediates the biosynthesis of viriditoxin, one of the 'classical' secondary metabolites produced by fungi and that has antibacterial activity. The first step is performed by the polyketide synthase VdtA which condenses one acetyl-CoA and 6 malonyl-CoA units to form the heptaketide monomer backbone of viriditoxin. The product of VdtA is then O-methylated on C7 by the O-methyltransferase VdtC. The O-methyl group is important for the stereoselective coupling of the monomers at the final step of viriditoxin biosynthesis. The short-chain dehydrogenase/reductase VdtF is involved in the reduction of the C3-C4 double bond. The FAD-binding monooxygenase VdtE then converts the ketone group into a methyl-ester group to yield semi-viriditoxin. Finally, the laccase VdtB is involved in dimerization of 2 semi-viriditoxin molecules to yield the final viriditoxin. The non-catalytic carboxylesterase-like protein VdtD affects the stereochemistical outcome of the coupling. The highly reducing polyketide synthase VdtX is not involved in viriditoxin synthesis, but might possibly play a role in the production of additional metabolites not identified yet. The sequence is that of Highly reducing polyketide synthase VdtX from Byssochlamys spectabilis (Paecilomyces variotii).